We begin with the raw amino-acid sequence, 150 residues long: Transcriptional regulator MraZ (150 aa).

SpoVT-AbrB domains follow at residues 5–51 (VANL…PQPE) and 80–123 (ATEC…DEDT).

Belongs to the MraZ family. Forms oligomers.

It localises to the cytoplasm. The protein localises to the nucleoid. This Thioalkalivibrio sulfidiphilus (strain HL-EbGR7) protein is Transcriptional regulator MraZ.